We begin with the raw amino-acid sequence, 481 residues long: Long chain base biosynthesis protein 1b (481 aa).

The helical transmembrane segment at 32 to 52 threads the bilayer; that stretch reads FGIHIDGHLVVEGLLIAAILF.

The protein belongs to the class-II pyridoxal-phosphate-dependent aminotransferase family. Heterodimer with LCB2. Component of the serine palmitoyltransferase (SPT) complex, composed of LCB1 and LCB2. Pyridoxal 5'-phosphate serves as cofactor.

Its subcellular location is the endoplasmic reticulum membrane. It carries out the reaction L-serine + hexadecanoyl-CoA + H(+) = 3-oxosphinganine + CO2 + CoA. Its pathway is lipid metabolism; sphingolipid metabolism. Its function is as follows. Serine palmitoyltransferase (SPT). The heterodimer formed with LCB2 constitutes the catalytic core. The protein is Long chain base biosynthesis protein 1b of Oryza sativa subsp. japonica (Rice).